A 353-amino-acid chain; its full sequence is Ribosomal RNA small subunit methyltransferase (353 aa).

Residues 1–10 are compositionally biased toward basic residues; that stretch reads MAGGKIRKEK. The segment at 1–23 is disordered; that stretch reads MAGGKIRKEKPKASNRAPSNHYQ. Residues histidine 35, leucine 37, glycine 62, glutamate 83, aspartate 111, and asparagine 126 each coordinate S-adenosyl-L-methionine. Residues 270-313 are disordered; that stretch reads ALNTTSMDLGDQSMGMEDDDNEMDDDDMEMDEGEGDGGETSEFK. Residues 285–308 are compositionally biased toward acidic residues; it reads MEDDDNEMDDDDMEMDEGEGDGGE.

The protein belongs to the class I-like SAM-binding methyltransferase superfamily. rRNA adenine N(6)-methyltransferase family. As to expression, expressed in rapidly dividing tissues, including root meristems and lateral root primordia, developing cotyledons and leaves, petals, anther, pollen grains and silique abscission zone.

It is found in the nucleus. The protein localises to the nucleolus. The enzyme catalyses adenosine(1785)/adenosine(1786) in 18S rRNA + 4 S-adenosyl-L-methionine = N(6)-dimethyladenosine(1785)/N(6)-dimethyladenosine(1786) in 18S rRNA + 4 S-adenosyl-L-homocysteine + 4 H(+). In terms of biological role, N6-adenine methyltransferase which modifies the AA dinucleotide at the plant nuclear 18S rRNA nucleotides A1785 and A1786. Required for generating appropriate patterns of gene expression during root development, including the cell-specific expression of transcriptional regulators involved in root hair and non-hair cells patterning. In Arabidopsis thaliana (Mouse-ear cress), this protein is Ribosomal RNA small subunit methyltransferase.